The chain runs to 110 residues: MINNVGIDIVENKRIKLKKEFIIKVLSTNEIQTFNTKTKKQKKEFLAGRWAVKEAIIKTLDQAISMNKIDIEYVNQKPVIQNKELQNILISISHEKKYAIGIALKQSDNK.

Residues D8 and E54 each contribute to the Mg(2+) site.

This sequence belongs to the P-Pant transferase superfamily. AcpS family. Requires Mg(2+) as cofactor.

The protein localises to the cytoplasm. The enzyme catalyses apo-[ACP] + CoA = holo-[ACP] + adenosine 3',5'-bisphosphate + H(+). Functionally, transfers the 4'-phosphopantetheine moiety from coenzyme A to a Ser of acyl-carrier-protein. The polypeptide is Holo-[acyl-carrier-protein] synthase (Mycoplasma mycoides subsp. mycoides SC (strain CCUG 32753 / NCTC 10114 / PG1)).